The following is a 334-amino-acid chain: Oligopeptide transport ATP-binding protein OppF (334 aa).

The ABC transporter domain maps to 12–265 (LEIADLKVHF…PLHPYTKALM (254 aa)). 57–64 (GESGCGKS) provides a ligand contact to ATP.

Belongs to the ABC transporter superfamily. The complex is composed of two ATP-binding proteins (OppD and OppF), two transmembrane proteins (OppB and OppC) and a solute-binding protein (OppA).

The protein resides in the cell inner membrane. The enzyme catalyses a [peptide](out) + ATP + H2O = a [peptide](in) + ADP + phosphate + H(+). It catalyses the reaction L-alanyl-gamma-D-glutamyl-meso-2,6-diaminopimelate(out) + ATP + H2O = L-alanyl-gamma-D-glutamyl-meso-2,6-diaminopimelate(in) + ADP + phosphate + H(+). In terms of biological role, part of the ABC transporter complex OppABCDF involved in the uptake of oligopeptides, including the cell wall murein tripeptide L-alanyl-gamma-D-glutamyl-meso-diaminopimelate. Probably responsible for energy coupling to the transport system. Plays an important nutritional role and is involved in the recycling of cell wall peptides. In Salmonella typhimurium (strain LT2 / SGSC1412 / ATCC 700720), this protein is Oligopeptide transport ATP-binding protein OppF.